The sequence spans 125 residues: Large ribosomal subunit protein bL12 (125 aa).

Belongs to the bacterial ribosomal protein bL12 family. In terms of assembly, homodimer. Part of the ribosomal stalk of the 50S ribosomal subunit. Forms a multimeric L10(L12)X complex, where L10 forms an elongated spine to which 2 to 4 L12 dimers bind in a sequential fashion. Binds GTP-bound translation factors.

Functionally, forms part of the ribosomal stalk which helps the ribosome interact with GTP-bound translation factors. Is thus essential for accurate translation. The protein is Large ribosomal subunit protein bL12 of Hyphomonas neptunium (strain ATCC 15444).